We begin with the raw amino-acid sequence, 857 residues long: Trehalose transporter 1 (857 aa).

Disordered regions lie at residues 1–28 (MSGR…KLKE) and 62–202 (DPFL…QKAT). At 1 to 392 (MSGRDNRGAG…VYRPTTNPIY (392 aa)) the chain is on the cytoplasmic side. At Ala9 the chain carries Phosphothreonine. Phosphoserine is present on Gly12. The segment covering 69–81 (VSPQRHPQNTVRT) has biased composition (polar residues). Basic and acidic residues predominate over residues 134–143 (EIREHRDRQQ). A compositionally biased stretch (polar residues) spans 171–181 (GNSNTNSNKAA). Residues Ser248, Ser249, and Ser250 each carry the phosphoserine modification. 2 disordered regions span residues 249 to 269 (SSEE…HQSL) and 280 to 299 (VLQG…EHKR). Ser320 and Ser322 each carry phosphoserine. The tract at residues 327–346 (LTSRQHFQQQRSISTDSRKS) is disordered. Residues 330–341 (RQHFQQQRSIST) are compositionally biased toward polar residues. Residues 393-413 (IWTQVLAALSVSLGSLVVGFV) form a helical membrane-spanning segment. Residues 414-440 (SAYTSPALVSMTDRNITSFEVTQDAGS) lie on the Extracellular side of the membrane. A glycan (N-linked (GlcNAc...) asparagine) is linked at Asn428. The chain crosses the membrane as a helical span at residues 441-461 (WVGGIMPLAGLAGGIAGGPLI). At 462–473 (EYLGRRNTILAT) the chain is on the cytoplasmic side. A helical membrane pass occupies residues 474–494 (AVPFIVSSLLIACAVNVAMVL). Topologically, residues 495–497 (CGR) are extracellular. The helical transmembrane segment at 498-518 (FLAGFCVGIASLSLPVYLGET) threads the bilayer. Residues 519 to 528 (VQPEVRGTLG) lie on the Cytoplasmic side of the membrane. Residues 529–549 (LLPTAFGNIGILLCFVAGSFM) traverse the membrane as a helical segment. Asn550 carries N-linked (GlcNAc...) asparagine glycosylation. The Extracellular segment spans residues 550–552 (NWS). A helical membrane pass occupies residues 553–573 (MLAFLGAALPVPFLILMFLIP). The Cytoplasmic portion of the chain corresponds to 574-636 (ETPRWFVGRG…ELLKLNNLKP (63 aa)). A helical transmembrane segment spans residues 637–657 (LSISLGLMFFQQFSGINAVIF). Topologically, residues 658–673 (YTVQIFKDAGSTIDGN) are extracellular. A helical transmembrane segment spans residues 674-694 (LCTIIVGIVNFLATFIGIVLI). Residues 695-700 (DRAGRK) lie on the Cytoplasmic side of the membrane. Residues 701-721 (ILLYVSDIAMVLTLFVLGGFF) form a helical membrane-spanning segment. The Extracellular segment spans residues 722 to 740 (YCKTYGPDVSHLGWLPLTC). The chain crosses the membrane as a helical span at residues 741-761 (FVIYILGFSLGFGPIPWLMMG). Residues 762–767 (EILPAK) are Cytoplasmic-facing. The helical transmembrane segment at 768–788 (IRGSAASVATAFNWFCTFVVT) threads the bilayer. At 789-801 (KTFQDLTVAMGAH) the chain is on the extracellular side. The helical transmembrane segment at 802–822 (GAFWLFGAICFVGLFFVIIYV) threads the bilayer. At 823 to 857 (PETQGKTLEDIERKMMGRVRRMSSVANIKPLSFNM) the chain is on the cytoplasmic side. Phosphoserine occurs at positions 845 and 846.

The protein belongs to the major facilitator superfamily. Sugar transporter (TC 2.A.1.1) family. Trehalose transporter subfamily. Expressed in perineurial glia of the outer layer of the nervous system that forms the blood brain barrier (at protein level). Expressed in the fat body (at protein level). In terms of tissue distribution, may be specifically expressed in perineurial glia (at protein level). As to expression, may be specifically expressed in the fat body (at protein level).

The protein resides in the cell membrane. It localises to the vesicle. It catalyses the reaction alpha,alpha-trehalose(in) = alpha,alpha-trehalose(out). It carries out the reaction D-glucose(out) = D-glucose(in). In terms of biological role, low-capacity facilitative transporter for trehalose. Can also transport glucose. Does not transport maltose, sucrose, lactose or fructose. Mediates the bidirectional transfer of trehalose. Responsible for the transport of trehalose synthesized in the fat body and the incorporation of trehalose into other tissues that require a carbon source, thereby regulating trehalose levels in the hemolymph. Required in glial cells of the blood brain barrier to fuel glycolysis but not required in neurons. Neurons rely on the citric acid cycle for their energy needs and utilise alanine and lactate, by-products of glial cell glycolysis released into the hemolymph, as fuel. Increased expression in glial cells of the blood brain barrier during starvation and increased cell surface localization enhances carbohydrate uptake to protect the central nervous system from restricted nutrient availability. In Drosophila melanogaster (Fruit fly), this protein is Trehalose transporter 1.